The chain runs to 142 residues: Large ribosomal subunit protein uL11 (142 aa).

Belongs to the universal ribosomal protein uL11 family. Part of the ribosomal stalk of the 50S ribosomal subunit. Interacts with L10 and the large rRNA to form the base of the stalk. L10 forms an elongated spine to which L12 dimers bind in a sequential fashion forming a multimeric L10(L12)X complex. Post-translationally, one or more lysine residues are methylated.

In terms of biological role, forms part of the ribosomal stalk which helps the ribosome interact with GTP-bound translation factors. The chain is Large ribosomal subunit protein uL11 from Brucella abortus (strain S19).